A 297-amino-acid polypeptide reads, in one-letter code: D-aminoacyl-tRNA deacylase (297 aa).

Belongs to the DtdA deacylase family. As to quaternary structure, monomer. It depends on Zn(2+) as a cofactor.

It carries out the reaction a D-aminoacyl-tRNA + H2O = a tRNA + a D-alpha-amino acid + H(+). It catalyses the reaction glycyl-tRNA(Ala) + H2O = tRNA(Ala) + glycine + H(+). D-aminoacyl-tRNA deacylase with broad substrate specificity. By recycling D-aminoacyl-tRNA to D-amino acids and free tRNA molecules, this enzyme counteracts the toxicity associated with the formation of D-aminoacyl-tRNA entities in vivo. This Methanosarcina acetivorans (strain ATCC 35395 / DSM 2834 / JCM 12185 / C2A) protein is D-aminoacyl-tRNA deacylase.